The chain runs to 168 residues: Phosphopantetheine adenylyltransferase (168 aa).

T13 is a binding site for substrate. ATP-binding positions include 13–14 (TF) and H21. The substrate site is built by K45, L78, and R92. ATP-binding positions include 93-95 (GLR), E103, and 128-134 (TQFISSG).

It belongs to the bacterial CoaD family. As to quaternary structure, homohexamer. It depends on Mg(2+) as a cofactor.

It localises to the cytoplasm. It catalyses the reaction (R)-4'-phosphopantetheine + ATP + H(+) = 3'-dephospho-CoA + diphosphate. Its pathway is cofactor biosynthesis; coenzyme A biosynthesis; CoA from (R)-pantothenate: step 4/5. Functionally, reversibly transfers an adenylyl group from ATP to 4'-phosphopantetheine, yielding dephospho-CoA (dPCoA) and pyrophosphate. The sequence is that of Phosphopantetheine adenylyltransferase from Wolbachia sp. subsp. Drosophila simulans (strain wRi).